The chain runs to 37 residues: Large ribosomal subunit protein bL36 (37 aa).

Belongs to the bacterial ribosomal protein bL36 family.

The chain is Large ribosomal subunit protein bL36 from Vesicomyosocius okutanii subsp. Calyptogena okutanii (strain HA).